A 137-amino-acid chain; its full sequence is MRTLWIMAVLLLGVEGHLLQLRKMIKKMTNKEPILSYGKYGCNCGMAGRGQPVDGTDRCCSIHNCCYGKVNGCSPKWDYYTYSEENGDIVCEEKHPCKDVCECDKAVATCFRDNLDTYKKRNIFHPKSSCVKVSTPC.

The first 16 residues, 1-16 (MRTLWIMAVLLLGVEG), serve as a signal peptide directing secretion. 7 disulfides stabilise this stretch: cysteine 42–cysteine 130, cysteine 44–cysteine 60, cysteine 59–cysteine 110, cysteine 65–cysteine 137, cysteine 66–cysteine 103, cysteine 73–cysteine 97, and cysteine 91–cysteine 101.

In terms of tissue distribution, expressed by the venom gland.

It is found in the secreted. Its function is as follows. Snake venom phospholipase A2 homolog that induces local edema a few hours after injection (5-10 ug) in the hind paw and shows weak anticoagulant and myotoxic activities. The sequence is that of Basic phospholipase A2 homolog Ts-R6 from Trimeresurus stejnegeri (Chinese green tree viper).